Here is a 129-residue protein sequence, read N- to C-terminus: Small ribosomal subunit protein uS11 (129 aa).

Belongs to the universal ribosomal protein uS11 family. As to quaternary structure, part of the 30S ribosomal subunit. Interacts with proteins S7 and S18. Binds to IF-3.

Its function is as follows. Located on the platform of the 30S subunit, it bridges several disparate RNA helices of the 16S rRNA. Forms part of the Shine-Dalgarno cleft in the 70S ribosome. This Pseudomonas putida (strain GB-1) protein is Small ribosomal subunit protein uS11.